The following is a 254-amino-acid chain: Nickel import ATP-binding protein NikD (254 aa).

The 240-residue stretch at P2–V241 folds into the ABC transporter domain. Residue G36 to S43 coordinates ATP.

The protein belongs to the ABC transporter superfamily. Nickel importer (TC 3.A.1.5.3) family. As to quaternary structure, the complex is composed of two ATP-binding proteins (NikD and NikE), two transmembrane proteins (NikB and NikC) and a solute-binding protein (NikA).

The protein localises to the cell inner membrane. It carries out the reaction Ni(2+)(out) + ATP + H2O = Ni(2+)(in) + ADP + phosphate + H(+). Part of the ABC transporter complex NikABCDE involved in nickel import. Responsible for energy coupling to the transport system. The polypeptide is Nickel import ATP-binding protein NikD (Escherichia coli O157:H7).